A 232-amino-acid chain; its full sequence is Sugar fermentation stimulation protein homolog (232 aa).

Belongs to the SfsA family.

This is Sugar fermentation stimulation protein homolog from Brucella anthropi (strain ATCC 49188 / DSM 6882 / CCUG 24695 / JCM 21032 / LMG 3331 / NBRC 15819 / NCTC 12168 / Alc 37) (Ochrobactrum anthropi).